The sequence spans 447 residues: C4-dicarboxylate transport protein (447 aa).

The next 8 helical transmembrane spans lie at 22–42 (FQVI…PLVG), 52–72 (FINL…VTGI), 90–110 (AYFL…AHVV), 159–179 (GNIL…ASVG), 199–219 (LVHI…AFTI), 232–252 (WLVG…LGVV), 325–347 (LFIA…LLVA), and 366–386 (AATL…ILGV).

Belongs to the dicarboxylate/amino acid:cation symporter (DAACS) (TC 2.A.23) family.

It localises to the cell inner membrane. In terms of biological role, responsible for the transport of dicarboxylates such as succinate, fumarate, and malate from the periplasm across the membrane. This Stenotrophomonas maltophilia (strain R551-3) protein is C4-dicarboxylate transport protein.